The primary structure comprises 610 residues: ATP-dependent zinc metalloprotease FtsH (610 aa).

At 1-3 the chain is on the cytoplasmic side; the sequence is MAK. A helical transmembrane segment spans residues 4–24; sequence NLMLWLVIAVVLMSIFQNFSA. At 25 to 97 the chain is on the extracellular side; it reads NNINNRKIDY…IIGAAPEEQS (73 aa). The chain crosses the membrane as a helical span at residues 98-118; it reads FFTAIFISWFPMLLLIGVWVF. Residues 119 to 610 lie on the Cytoplasmic side of the membrane; the sequence is FMRQMQVGGG…SNICTDDDNN (492 aa). 192-199 lines the ATP pocket; it reads GPPGTGKT. H414 is a binding site for Zn(2+). The active site involves E415. Positions 418 and 492 each coordinate Zn(2+).

This sequence in the central section; belongs to the AAA ATPase family. It in the C-terminal section; belongs to the peptidase M41 family. Homohexamer. Zn(2+) serves as cofactor.

It is found in the cell membrane. Functionally, acts as a processive, ATP-dependent zinc metallopeptidase for both cytoplasmic and membrane proteins. Plays a role in the quality control of integral membrane proteins. This Buchnera aphidicola subsp. Baizongia pistaciae (strain Bp) protein is ATP-dependent zinc metalloprotease FtsH.